The following is a 101-amino-acid chain: Small ribosomal subunit protein uS14 (101 aa).

A disordered region spans residues 1–20 (MAKTSAVEKNKRRRKLVANH). Basic residues predominate over residues 10 to 20 (NKRRRKLVANH).

It belongs to the universal ribosomal protein uS14 family. Part of the 30S ribosomal subunit. Contacts proteins S3 and S10.

Its function is as follows. Binds 16S rRNA, required for the assembly of 30S particles and may also be responsible for determining the conformation of the 16S rRNA at the A site. This is Small ribosomal subunit protein uS14 from Sinorhizobium medicae (strain WSM419) (Ensifer medicae).